Reading from the N-terminus, the 1138-residue chain is Pesticidal crystal protein Cry7Ab (1138 aa).

The protein belongs to the delta endotoxin family.

Its function is as follows. Promotes colloidosmotic lysis by binding to the midgut epithelial cells of Coleoptera. The polypeptide is Pesticidal crystal protein Cry7Ab (cry7Ab) (Bacillus thuringiensis subsp. dakota).